A 257-amino-acid polypeptide reads, in one-letter code: MQVDIIKQVRDTKPLVHHLTNQVVMNFSANGLLSFGGSPIMAKAIEEVEQIAAISNAVLINIGTLTSTELESMIAAGKTANKHNIPVLLDPVGVAATSFRRNAIDKILEEVRPTVIKGNAGELASLVNINLEAKGVDSIGDGNLDVIAQKVSEKYNTAVVVTGETDVIYVDNHLIHNGTGHHYLSSITGSGCLLGSIIAACLTTKSTLKDQLMTAVSFYGLSASYAANQENVHGTGSFLPVFIDSLSKMPQELTEGE.

Substrate is bound at residue Met-41. 2 residues coordinate ATP: Lys-117 and Thr-162. Position 189 (Gly-189) interacts with substrate.

The protein belongs to the Thz kinase family. Mg(2+) serves as cofactor.

It catalyses the reaction 5-(2-hydroxyethyl)-4-methylthiazole + ATP = 4-methyl-5-(2-phosphooxyethyl)-thiazole + ADP + H(+). It participates in cofactor biosynthesis; thiamine diphosphate biosynthesis; 4-methyl-5-(2-phosphoethyl)-thiazole from 5-(2-hydroxyethyl)-4-methylthiazole: step 1/1. In terms of biological role, catalyzes the phosphorylation of the hydroxyl group of 4-methyl-5-beta-hydroxyethylthiazole (THZ). The protein is Hydroxyethylthiazole kinase 1 of Oceanobacillus iheyensis (strain DSM 14371 / CIP 107618 / JCM 11309 / KCTC 3954 / HTE831).